A 198-amino-acid chain; its full sequence is Ribonuclease HII (198 aa).

In terms of domain architecture, RNase H type-2 spans 2–191 (VLECGVDETG…IRELLVGKDN (190 aa)). 3 residues coordinate a divalent metal cation: D8, E9, and D100.

It belongs to the RNase HII family. Requires Mn(2+) as cofactor. Mg(2+) serves as cofactor.

It is found in the cytoplasm. It carries out the reaction Endonucleolytic cleavage to 5'-phosphomonoester.. In terms of biological role, endonuclease that specifically degrades the RNA of RNA-DNA hybrids. The chain is Ribonuclease HII from Desulforamulus reducens (strain ATCC BAA-1160 / DSM 100696 / MI-1) (Desulfotomaculum reducens).